The sequence spans 364 residues: Ribosomal RNA large subunit methyltransferase F (364 aa).

Positions 1-17 (MPKPAIKTAAKPATSSA) are enriched in low complexity. Residues 1–53 (MPKPAIKTAAKPATSSAGKRGKPNTPKSVAKPKTAKPKTASKPKVKPGEKKRL) form a disordered region. Positions 33 to 53 (KTAKPKTASKPKVKPGEKKRL) are enriched in basic residues.

The protein belongs to the methyltransferase superfamily. METTL16/RlmF family.

It localises to the cytoplasm. The catalysed reaction is adenosine(1618) in 23S rRNA + S-adenosyl-L-methionine = N(6)-methyladenosine(1618) in 23S rRNA + S-adenosyl-L-homocysteine + H(+). Specifically methylates the adenine in position 1618 of 23S rRNA. This Shewanella sp. (strain MR-7) protein is Ribosomal RNA large subunit methyltransferase F.